Reading from the N-terminus, the 107-residue chain is Nucleoid-associated protein MCA1327 (107 aa).

The protein belongs to the YbaB/EbfC family. In terms of assembly, homodimer.

The protein resides in the cytoplasm. It localises to the nucleoid. Binds to DNA and alters its conformation. May be involved in regulation of gene expression, nucleoid organization and DNA protection. In Methylococcus capsulatus (strain ATCC 33009 / NCIMB 11132 / Bath), this protein is Nucleoid-associated protein MCA1327.